The chain runs to 506 residues: Ribose import ATP-binding protein RbsA (506 aa).

ABC transporter domains follow at residues 5-237 (VQLI…VGRP) and 249-492 (PFGA…LAIE). 37 to 44 (GENGAGKS) contacts ATP.

It belongs to the ABC transporter superfamily. Ribose importer (TC 3.A.1.2.1) family. The complex is composed of an ATP-binding protein (RbsA), two transmembrane proteins (RbsC) and a solute-binding protein (RbsB).

The protein resides in the cell inner membrane. The enzyme catalyses D-ribose(out) + ATP + H2O = D-ribose(in) + ADP + phosphate + H(+). Its function is as follows. Part of the ABC transporter complex RbsABC involved in ribose import. Responsible for energy coupling to the transport system. The chain is Ribose import ATP-binding protein RbsA from Chelativorans sp. (strain BNC1).